The chain runs to 71 residues: Beta-defensin 25 (71 aa).

The signal sequence occupies residues 1-22 (MAKWILLIVALLVLSHVPPGST). Disulfide bonds link C27/C54, C34/C48, and C38/C55.

It belongs to the beta-defensin family.

The protein localises to the secreted. Has antibacterial activity. The sequence is that of Beta-defensin 25 (Defb25) from Mus musculus (Mouse).